Consider the following 83-residue polypeptide: Small ribosomal subunit protein eS21 (83 aa).

Belongs to the eukaryotic ribosomal protein eS21 family. As to quaternary structure, component of the 40S small ribosomal subunit. Interacts with sta.

The protein localises to the cytoplasm. It localises to the cytosol. Its subcellular location is the rough endoplasmic reticulum. May be an associated component of the ribosome rather than a core structural subunit. May act as a translation initiation factor. Has a role in regulation of cell proliferation in the hematopoietic organs and the imaginal disks of larva. This Drosophila grimshawi (Hawaiian fruit fly) protein is Small ribosomal subunit protein eS21 (RpS21).